Here is a 306-residue protein sequence, read N- to C-terminus: Protein STPG3 (306 aa).

The disordered stretch occupies residues 210–230 (CSYTPLLPTSKPSGEKRPSPN).

The sequence is that of Protein STPG3 from Mus musculus (Mouse).